The sequence spans 392 residues: MGIKHCCYILYFTLALVTLLQPVRSAEDLQQILPSANETRSLTTCGTYNIIDGCWRGKADWAENRKALADCAQGFAKGTIGGKDGDIYTVTSELDDDVANPKEGTLRFGAAQNRPLWIIFARDMVIRLDRELAINNDKTIDGRGAKVEIINAGFAIYNVKNIIIHNIIMHDIVVNPGGLIKSHDGPPVPRKGSDGDAIGISGGSQIWIDHCSLSKAVDGLIDAKHGSTHFTVSNCLFTQHQYLLLFWDFDERGMLCTVAFNKFTDNVDQRMPNLRHGFVQVVNNNYERWGSYALGGSAGPTILSQGNRFLASDIKKEVVGRYGESAMSESINWNWRSYMDVFENGAIFVPSGVDPVLTPEQNAGMIPAEPGEAVLRLTSSAGVLSCQPGAPC.

Residues 1–25 (MGIKHCCYILYFTLALVTLLQPVRS) form the signal peptide. N37 is a glycosylation site (N-linked (GlcNAc...) asparagine). Cysteines 54 and 71 form a disulfide. Positions 194, 218, and 222 each coordinate Ca(2+). R270 is a catalytic residue.

Belongs to the polysaccharide lyase 1 family. Amb a subfamily. Monomer. Ca(2+) is required as a cofactor. In terms of processing, the N-terminus is blocked. In terms of tissue distribution, pollen and flowers.

The catalysed reaction is Eliminative cleavage of (1-&gt;4)-alpha-D-galacturonan to give oligosaccharides with 4-deoxy-alpha-D-galact-4-enuronosyl groups at their non-reducing ends.. Its pathway is glycan metabolism; pectin degradation; 2-dehydro-3-deoxy-D-gluconate from pectin: step 2/5. Has pectate lyase activity. The sequence is that of Pectate lyase 3 from Ambrosia artemisiifolia (Common ragweed).